The following is a 217-amino-acid chain: Ras-related protein RABA5b (217 aa).

19-26 (GDSAVGKS) serves as a coordination point for GTP. Positions 41-49 (SKATIGVEF) match the Effector region motif. GTP-binding positions include 67 to 71 (DTAGQ), 125 to 128 (NKCD), and 155 to 156 (SA). 2 S-geranylgeranyl cysteine lipidation sites follow: Cys-214 and Cys-215.

Belongs to the small GTPase superfamily. Rab family.

The protein resides in the cell membrane. Its function is as follows. Intracellular vesicle trafficking and protein transport. The polypeptide is Ras-related protein RABA5b (RABA5B) (Arabidopsis thaliana (Mouse-ear cress)).